The following is a 354-amino-acid chain: Ornithine transcarbamylase, mitochondrial (354 aa).

The N-terminal 32 residues, 1–32, are a transit peptide targeting the mitochondrion; that stretch reads MLFHLRTLLNNAALRNGHNFVVRNFRCGQPLQ. K70 carries the N6-acetyllysine; alternate modification. Residue K70 is modified to N6-succinyllysine; alternate. K80 carries the N6-succinyllysine modification. At K88 the chain carries N6-acetyllysine; alternate. K88 carries the post-translational modification N6-succinyllysine; alternate. Phosphoserine is present on S133. An N6-acetyllysine; alternate mark is found at K144, K221, K231, and K238. 4 positions are modified to N6-succinyllysine; alternate: K144, K221, K231, and K238. K243 is modified (N6-acetyllysine). D263 is an active-site residue. N6-succinyllysine is present on residues K274 and K289. The residue at position 292 (K292) is an N6-acetyllysine; alternate. The residue at position 292 (K292) is an N6-succinyllysine; alternate. Residue C303 is part of the active site. K307 carries the N6-acetyllysine; alternate modification. K307 carries the post-translational modification N6-succinyllysine; alternate.

The protein belongs to the aspartate/ornithine carbamoyltransferase superfamily. OTCase family. Homotrimer. Acetylation at Lys-88 negatively regulates ornithine carbamoyltransferase activity in response to nutrient signals.

The protein localises to the mitochondrion matrix. The enzyme catalyses carbamoyl phosphate + L-ornithine = L-citrulline + phosphate + H(+). The protein operates within nitrogen metabolism; urea cycle; L-citrulline from L-ornithine and carbamoyl phosphate: step 1/1. Negatively regulated by lysine acetylation. Its function is as follows. Catalyzes the second step of the urea cycle, the condensation of carbamoyl phosphate with L-ornithine to form L-citrulline. The urea cycle ensures the detoxification of ammonia by converting it to urea for excretion. The protein is Ornithine transcarbamylase, mitochondrial of Bos taurus (Bovine).